Here is a 434-residue protein sequence, read N- to C-terminus: Adenylosuccinate synthetase (434 aa).

GTP is bound by residues 22–28 and 50–52; these read GDEGKGK and GHT. The active-site Proton acceptor is the Asp23. The Mg(2+) site is built by Asp23 and Gly50. IMP contacts are provided by residues 23 to 26, 48 to 51, Thr139, Arg153, Gln234, Thr249, and Arg313; these read DEGK and NAGH. His51 serves as the catalytic Proton donor. 309-315 contributes to the substrate binding site; the sequence is ATTGRKR. GTP contacts are provided by residues Arg315, 341–343, and 423–425; these read KLD and SVG.

It belongs to the adenylosuccinate synthetase family. Homodimer. It depends on Mg(2+) as a cofactor.

The protein localises to the cytoplasm. The catalysed reaction is IMP + L-aspartate + GTP = N(6)-(1,2-dicarboxyethyl)-AMP + GDP + phosphate + 2 H(+). The protein operates within purine metabolism; AMP biosynthesis via de novo pathway; AMP from IMP: step 1/2. Functionally, plays an important role in the de novo pathway of purine nucleotide biosynthesis. Catalyzes the first committed step in the biosynthesis of AMP from IMP. This Chlorobium phaeobacteroides (strain DSM 266 / SMG 266 / 2430) protein is Adenylosuccinate synthetase.